Reading from the N-terminus, the 190-residue chain is MVRVSTSEFRVGLRVKIDGQPYVILQNDFVKPGKGQAFNRIKVKNFLTGRVIEKTFKSGESIETADVREQQMRLLYTDQEGATFMDDETFEQELIFWDKLENVRQWLLEDTIYTLVLYNGDVISVEPPIFMELTIAETAPGVRGDTASGRVLKPATTNTGAKIMVPIFIEEGEVVKVDTRTGSYESRVSK.

Belongs to the elongation factor P family.

The protein resides in the cytoplasm. Its pathway is protein biosynthesis; polypeptide chain elongation. In terms of biological role, involved in peptide bond synthesis. Stimulates efficient translation and peptide-bond synthesis on native or reconstituted 70S ribosomes in vitro. Probably functions indirectly by altering the affinity of the ribosome for aminoacyl-tRNA, thus increasing their reactivity as acceptors for peptidyl transferase. The sequence is that of Elongation factor P 2 (efp2) from Chlamydia trachomatis serovar D (strain ATCC VR-885 / DSM 19411 / UW-3/Cx).